A 222-amino-acid polypeptide reads, in one-letter code: Chalcone--flavanone isomerase 1 (222 aa).

Residues Thr48, Asn113, and Thr190 each contribute to the substrate site.

The protein belongs to the chalcone isomerase family.

The enzyme catalyses a chalcone = a flavanone.. The protein operates within secondary metabolite biosynthesis; flavonoid biosynthesis. In terms of biological role, catalyzes the intramolecular cyclization of bicyclic chalcones into tricyclic (S)-flavanones. Responsible for the isomerization of 4,2',4',6'-tetrahydroxychalcone (also termed chalcone) into naringenin. This is Chalcone--flavanone isomerase 1 (CHI1) from Medicago sativa (Alfalfa).